The following is a 323-amino-acid chain: Beta-ketoacyl-[acyl-carrier-protein] synthase III (323 aa).

Residues C113 and H250 contribute to the active site. Residues 251-255 (QANKR) are ACP-binding. N280 is an active-site residue.

Belongs to the thiolase-like superfamily. FabH family. As to quaternary structure, homodimer.

It is found in the cytoplasm. The enzyme catalyses malonyl-[ACP] + acetyl-CoA + H(+) = 3-oxobutanoyl-[ACP] + CO2 + CoA. Its pathway is lipid metabolism; fatty acid biosynthesis. In terms of biological role, catalyzes the condensation reaction of fatty acid synthesis by the addition to an acyl acceptor of two carbons from malonyl-ACP. Catalyzes the first condensation reaction which initiates fatty acid synthesis and may therefore play a role in governing the total rate of fatty acid production. Possesses both acetoacetyl-ACP synthase and acetyl transacylase activities. Its substrate specificity determines the biosynthesis of branched-chain and/or straight-chain of fatty acids. The polypeptide is Beta-ketoacyl-[acyl-carrier-protein] synthase III (Brucella anthropi (strain ATCC 49188 / DSM 6882 / CCUG 24695 / JCM 21032 / LMG 3331 / NBRC 15819 / NCTC 12168 / Alc 37) (Ochrobactrum anthropi)).